The chain runs to 245 residues: uncharacterized protein (245 aa).

This is an uncharacterized protein from Bacillus subtilis (strain 168).